The sequence spans 750 residues: NAD(P)H-quinone oxidoreductase subunit 5, chloroplastic (750 aa).

Helical transmembrane passes span 9–29 (WIIPFIPFPVPMLIGVGLLLF), 40–60 (WAFPSILLLTIVMMFSLDLSI), 89–109 (IDSLTSIMSILITTVGILVLI), 125–145 (FAYLTLFNISMLGLVTSSNLI), 147–167 (IYVFWELVGMCSYLLIGFWFT), 185–205 (GDFGLLLGILGLYWITGSLEF), 219–239 (NEVNIFFLTLVALLLFCGSVA), 258–278 (TPISALIHAATMVAAGIFLVA), 280–300 (LLPLFIVLPAIMNGIAFIGII), 327–347 (LGYMMLALGMGSYRAALFHLI), 354–374 (ALLFLGSGSIIHSMEALVGYS), 396–416 (TSFLVGTLSLCGIPPFACFWS), 425–445 (WLYSPIFAIIACCTAGLTAFY), 554–574 (FSILVLVLFTLFVGTIGISFS), 607–627 (FLTNAAFSVILTFLGIFIASF), and 728–748 (YILLYIFYIVIFILIWYFLFT).

This sequence belongs to the complex I subunit 5 family. As to quaternary structure, NDH is composed of at least 16 different subunits, 5 of which are encoded in the nucleus.

The protein localises to the plastid. The protein resides in the chloroplast thylakoid membrane. It catalyses the reaction a plastoquinone + NADH + (n+1) H(+)(in) = a plastoquinol + NAD(+) + n H(+)(out). It carries out the reaction a plastoquinone + NADPH + (n+1) H(+)(in) = a plastoquinol + NADP(+) + n H(+)(out). In terms of biological role, NDH shuttles electrons from NAD(P)H:plastoquinone, via FMN and iron-sulfur (Fe-S) centers, to quinones in the photosynthetic chain and possibly in a chloroplast respiratory chain. The immediate electron acceptor for the enzyme in this species is believed to be plastoquinone. Couples the redox reaction to proton translocation, and thus conserves the redox energy in a proton gradient. The polypeptide is NAD(P)H-quinone oxidoreductase subunit 5, chloroplastic (ndhF) (Glycine max (Soybean)).